A 361-amino-acid chain; its full sequence is RNA-binding protein 4 (361 aa).

RRM domains follow at residues 2-72 (VKLF…ASKN) and 78-148 (TKLH…LSTS). Lys79 is covalently cross-linked (Glycyl lysine isopeptide (Lys-Gly) (interchain with G-Cter in SUMO2)). A Phosphoserine modification is found at Ser86. Residues 160–177 (SGCYRCGKEGHWSKECPI) form a CCHC-type zinc finger. The interaction with TNPO3 stretch occupies residues 196–361 (AVRTPYTMSY…YADRARYSAF (166 aa)). Position 306 is a phosphoserine (Ser306).

Interacts with TNPO3; the interaction mediates nuclear import of the protein and is disrupted by nuclear Ran bound to GTP. Interacts with EIF4G1 and WT1. Interacts with EIF4A1; the interaction is modulated under stress-induced conditions. Interacts with AGO1. Interacts with AGO2; the interaction occurs under both cell proliferation and differentiation conditions and in an RNA- and phosphorylation-independent manner. Interacts with DDX5; the interaction occurs in an RNA-independent manner. Interacts with RBPMS; the interaction allows cooperative assembly of RNA-bound stable cell-specific alternative splicing regulatory complexes. Phosphorylated. Phosphorylated in vitro on Ser-306 by SRPK1. Phosphorylation on Ser-306 is induced upon cell stress signaling, which alters its subcellular localization and may modulate its activity on IRES-mediated mRNA translation. Phosphorylated. Phosphorylation on Ser-306 is induced upon cell muscle differentiation. As to expression, expressed in the suprachiasmatic nucleus (SCN). Expressed in myocytes; expression gradually increases during muscle cell differentiation (at protein level). Expressed in the suprachiasmatic nucleus (SCN).

It localises to the nucleus. It is found in the nucleolus. The protein localises to the nucleus speckle. Its subcellular location is the cytoplasm. The protein resides in the cytoplasmic granule. RNA-binding factor involved in multiple aspects of cellular processes like alternative splicing of pre-mRNA and translation regulation. Modulates alternative 5'-splice site and exon selection. Acts as a muscle cell differentiation-promoting factor. Activates exon skipping of the PTB pre-mRNA during muscle cell differentiation. Antagonizes the activity of the splicing factor PTBP1 to modulate muscle cell-specific exon selection of alpha tropomyosin. Binds to intronic pyrimidine-rich sequence of the TPM1 and MAPT pre-mRNAs. Required for the translational activation of PER1 mRNA in response to circadian clock. Binds directly to the 3'-UTR of the PER1 mRNA. Exerts a suppressive activity on Cap-dependent translation via binding to CU-rich responsive elements within the 3'UTR of mRNAs, a process increased under stress conditions or during myocytes differentiation. Recruits EIF4A1 to stimulate IRES-dependent translation initiation in respons to cellular stress. Associates to internal ribosome entry segment (IRES) in target mRNA species under stress conditions. Plays a role for miRNA-guided RNA cleavage and translation suppression by promoting association of AGO2-containing miRNPs with their cognate target mRNAs. Associates with miRNAs during muscle cell differentiation. Binds preferentially to 5'-CGCGCG[GCA]-3' motif in vitro. The polypeptide is RNA-binding protein 4 (Rbm4) (Mus musculus (Mouse)).